The following is a 106-amino-acid chain: Probable insulin-like peptide beta-type 2 (106 aa).

An N-terminal signal peptide occupies residues 1 to 15 (MNAIIFCLLFTTVTA). Residues 16 to 56 (TYEVFGKGIEHRNEHLIINQLDIIPVESTPTPNRASRVQKR) constitute a propeptide that is removed on maturation. Intrachain disulfides connect Cys-58-Cys-86, Cys-70-Cys-99, Cys-73-Cys-100, and Cys-85-Cys-90.

Belongs to the insulin family.

The protein localises to the secreted. The protein is Probable insulin-like peptide beta-type 2 (ins-2) of Caenorhabditis elegans.